The chain runs to 196 residues: ATP-dependent Clp protease proteolytic subunit (196 aa).

The active-site Nucleophile is S101. The active site involves H126.

It belongs to the peptidase S14 family. As to quaternary structure, component of the chloroplastic Clp protease core complex.

Its subcellular location is the plastid. The protein resides in the chloroplast stroma. The enzyme catalyses Hydrolysis of proteins to small peptides in the presence of ATP and magnesium. alpha-casein is the usual test substrate. In the absence of ATP, only oligopeptides shorter than five residues are hydrolyzed (such as succinyl-Leu-Tyr-|-NHMec, and Leu-Tyr-Leu-|-Tyr-Trp, in which cleavage of the -Tyr-|-Leu- and -Tyr-|-Trp bonds also occurs).. Functionally, cleaves peptides in various proteins in a process that requires ATP hydrolysis. Has a chymotrypsin-like activity. Plays a major role in the degradation of misfolded proteins. The sequence is that of ATP-dependent Clp protease proteolytic subunit from Morus indica (Mulberry).